The primary structure comprises 157 residues: Frd operon probable iron-sulfur subunit A (157 aa).

3 4Fe-4S ferredoxin-type domains span residues 24-55 (KGFS…IHNK), 56-85 (DYYY…VVSR), and 100-133 (FKAE…CIDR). 12 residues coordinate [4Fe-4S] cluster: C34, C37, C42, C46, C65, C68, C71, C75, C107, C110, C119, and C123.

The protein is Frd operon probable iron-sulfur subunit A of Proteus vulgaris.